Here is a 148-residue protein sequence, read N- to C-terminus: Transcriptional regulator MraZ (148 aa).

2 consecutive SpoVT-AbrB domains span residues 5-53 (ETAI…VEKE) and 82-125 (SALL…SEQA).

Belongs to the MraZ family. In terms of assembly, forms oligomers.

The protein resides in the cytoplasm. The protein localises to the nucleoid. This Xylella fastidiosa (strain Temecula1 / ATCC 700964) protein is Transcriptional regulator MraZ.